The primary structure comprises 221 residues: MKYKPVHRFDMSPKDMIKVQKQLAKEVKLIHFSDEPNLVSGVDLSFPKDEGLAVIVTMDFKKLSVIDVTYAVDKITLPYIPGLLAFRELPIFLKAWEKLEIEPDIVFFDGQGYAHPRRMGIATHASFFIEKPTIGIAKSKLIGEYEEPGKKKGEFTFLYHKDEKIGIVLRTRDNVKPVFVSPGNLVDFNNALDFTYHFATKYKIPEITRKAHLYTQSLKQR.

Mg(2+) contacts are provided by Asp43 and Asp109.

The protein belongs to the endonuclease V family. It depends on Mg(2+) as a cofactor.

The protein resides in the cytoplasm. The catalysed reaction is Endonucleolytic cleavage at apurinic or apyrimidinic sites to products with a 5'-phosphate.. Its function is as follows. DNA repair enzyme involved in the repair of deaminated bases. Selectively cleaves double-stranded DNA at the second phosphodiester bond 3' to a deoxyinosine leaving behind the intact lesion on the nicked DNA. In Petrotoga mobilis (strain DSM 10674 / SJ95), this protein is Endonuclease V.